The sequence spans 345 residues: Anthranilate phosphoribosyltransferase (345 aa).

5-phospho-alpha-D-ribose 1-diphosphate contacts are provided by residues Gly79, 82–83 (GD), Thr87, 89–92 (NVST), 106–114 (KHGNRAVSG), and Ser118. Gly79 provides a ligand contact to anthranilate. Mg(2+) is bound at residue Ser91. Position 109 (Asn109) interacts with anthranilate. An anthranilate-binding site is contributed by Arg164. Mg(2+) contacts are provided by Asp223 and Glu224.

This sequence belongs to the anthranilate phosphoribosyltransferase family. Homodimer. The cofactor is Mg(2+).

It carries out the reaction N-(5-phospho-beta-D-ribosyl)anthranilate + diphosphate = 5-phospho-alpha-D-ribose 1-diphosphate + anthranilate. The protein operates within amino-acid biosynthesis; L-tryptophan biosynthesis; L-tryptophan from chorismate: step 2/5. Functionally, catalyzes the transfer of the phosphoribosyl group of 5-phosphorylribose-1-pyrophosphate (PRPP) to anthranilate to yield N-(5'-phosphoribosyl)-anthranilate (PRA). This Sulfurisphaera tokodaii (strain DSM 16993 / JCM 10545 / NBRC 100140 / 7) (Sulfolobus tokodaii) protein is Anthranilate phosphoribosyltransferase.